Reading from the N-terminus, the 398-residue chain is S-adenosylmethionine synthase (398 aa).

His26 lines the ATP pocket. Mg(2+) is bound at residue Asp28. K(+) is bound at residue Glu54. Glu67 and Gln110 together coordinate L-methionine. The segment at 110 to 120 (QSPDIAQGVNE) is flexible loop. ATP contacts are provided by residues 177–179 (DAK), 243–244 (RF), Asp252, 258–259 (RK), Ala275, and Lys279. Asp252 contacts L-methionine. L-methionine is bound at residue Lys283.

It belongs to the AdoMet synthase family. As to quaternary structure, homotetramer; dimer of dimers. It depends on Mg(2+) as a cofactor. K(+) serves as cofactor.

The protein localises to the cytoplasm. It carries out the reaction L-methionine + ATP + H2O = S-adenosyl-L-methionine + phosphate + diphosphate. The protein operates within amino-acid biosynthesis; S-adenosyl-L-methionine biosynthesis; S-adenosyl-L-methionine from L-methionine: step 1/1. Its function is as follows. Catalyzes the formation of S-adenosylmethionine (AdoMet) from methionine and ATP. The overall synthetic reaction is composed of two sequential steps, AdoMet formation and the subsequent tripolyphosphate hydrolysis which occurs prior to release of AdoMet from the enzyme. This is S-adenosylmethionine synthase from Desulfotalea psychrophila (strain LSv54 / DSM 12343).